Reading from the N-terminus, the 177-residue chain is Ribonuclease H (177 aa).

In terms of domain architecture, RNase H type-1 spans 1–142; that stretch reads MSKQVEIFTD…ADELAREGMA (142 aa). Residues Asp10, Glu48, Asp70, and Asp134 each contribute to the Mg(2+) site. Residues 126–138 are compositionally biased toward basic and acidic residues; it reads GHTENERADELAR. Residues 126-177 are disordered; the sequence is GHTENERADELAREGMAPFKKGSFKPAASAPKPDAQLKQPVATKARRSTQSY.

The protein belongs to the RNase H family. Monomer. It depends on Mg(2+) as a cofactor.

It localises to the cytoplasm. The catalysed reaction is Endonucleolytic cleavage to 5'-phosphomonoester.. Its function is as follows. Endonuclease that specifically degrades the RNA of RNA-DNA hybrids. In Mesorhizobium japonicum (strain LMG 29417 / CECT 9101 / MAFF 303099) (Mesorhizobium loti (strain MAFF 303099)), this protein is Ribonuclease H.